The primary structure comprises 97 residues: Co-chaperonin GroES (97 aa).

The protein belongs to the GroES chaperonin family. In terms of assembly, heptamer of 7 subunits arranged in a ring. Interacts with the chaperonin GroEL.

It localises to the cytoplasm. Functionally, together with the chaperonin GroEL, plays an essential role in assisting protein folding. The GroEL-GroES system forms a nano-cage that allows encapsulation of the non-native substrate proteins and provides a physical environment optimized to promote and accelerate protein folding. GroES binds to the apical surface of the GroEL ring, thereby capping the opening of the GroEL channel. This is Co-chaperonin GroES from Klebsiella pneumoniae (strain 342).